Consider the following 226-residue polypeptide: MTVRKVVATAVLVALVSLVLNNAAAFTPNWVYQTLEDGRRRSVGLWWACWLVERPRGAPGPGARPGPADVRDCEALGWGSEAAGFQESRGTVKLQFDMMRACNLVATAALAAGQLTFVLGLTGLPLLSPDAQCWEEAMAAAFQLASFVLVIGLVTFYRIGPYTSLSWSCYLNIGACLLATLAAAMLIWNVLHRREDCTAPRVIVISRSLTARFRRGLDNDYVESPC.

The Cytoplasmic portion of the chain corresponds to Met-1–Lys-5. Residues Val-6 to Phe-26 form a helical membrane-spanning segment. Residues Thr-27–Asn-103 are Extracellular-facing. Residues Leu-104–Leu-124 traverse the membrane as a helical segment. At Pro-125–Glu-136 the chain is on the cytoplasmic side. The chain crosses the membrane as a helical span at residues Ala-137–Tyr-157. Topologically, residues Arg-158–Tyr-170 are extracellular. Residues Leu-171–Leu-191 traverse the membrane as a helical segment. At His-192–Cys-226 the chain is on the cytoplasmic side.

It localises to the cell junction. The protein resides in the adherens junction. The protein localises to the cell membrane. Its function is as follows. Can influence paracellular permeability. Appears to be involved in cell-cell interactions through adherens. The protein is Transmembrane protein 204 (TMEM204) of Bos taurus (Bovine).